We begin with the raw amino-acid sequence, 101 residues long: CRISPR-associated endoribonuclease Cas2 (101 aa).

D8 provides a ligand contact to Mg(2+).

It belongs to the CRISPR-associated endoribonuclease Cas2 protein family. Homodimer, forms a heterotetramer with a Cas1 homodimer. Mg(2+) serves as cofactor.

In terms of biological role, CRISPR (clustered regularly interspaced short palindromic repeat), is an adaptive immune system that provides protection against mobile genetic elements (viruses, transposable elements and conjugative plasmids). CRISPR clusters contain sequences complementary to antecedent mobile elements and target invading nucleic acids. CRISPR clusters are transcribed and processed into CRISPR RNA (crRNA). Functions as a ssRNA-specific endoribonuclease. Involved in the integration of spacer DNA into the CRISPR cassette. The chain is CRISPR-associated endoribonuclease Cas2 from Parvibaculum lavamentivorans (strain DS-1 / DSM 13023 / NCIMB 13966).